The sequence spans 208 residues: Uracil phosphoribosyltransferase (208 aa).

5-phospho-alpha-D-ribose 1-diphosphate is bound by residues Arg-78, Arg-103, and 130–138 (DPMLATGGS). Uracil is bound by residues Ile-193 and 198 to 200 (GDA). Asp-199 lines the 5-phospho-alpha-D-ribose 1-diphosphate pocket.

The protein belongs to the UPRTase family. Requires Mg(2+) as cofactor.

It catalyses the reaction UMP + diphosphate = 5-phospho-alpha-D-ribose 1-diphosphate + uracil. The protein operates within pyrimidine metabolism; UMP biosynthesis via salvage pathway; UMP from uracil: step 1/1. Allosterically activated by GTP. Its function is as follows. Catalyzes the conversion of uracil and 5-phospho-alpha-D-ribose 1-diphosphate (PRPP) to UMP and diphosphate. The polypeptide is Uracil phosphoribosyltransferase (Aeromonas salmonicida (strain A449)).